The following is a 204-amino-acid chain: UPF0301 protein Mflv_0850 (204 aa).

Belongs to the UPF0301 (AlgH) family.

The sequence is that of UPF0301 protein Mflv_0850 from Mycolicibacterium gilvum (strain PYR-GCK) (Mycobacterium gilvum (strain PYR-GCK)).